A 518-amino-acid chain; its full sequence is Arginyl-tRNA--protein transferase 1 (518 aa).

The span at 149-165 (ESLQSEGKNSKKEEPHE) shows a compositional bias: basic and acidic residues. Residues 149–207 (ESLQSEGKNSKKEEPHELLQSQDSVGEKLGSGEPSHSVKVHTVPKPGKGADLSKPPCRK) form a disordered region. Position 169 is a phosphoserine (Ser169).

This sequence belongs to the R-transferase family. As to quaternary structure, monomer. Interacts with LIAT1; LIAT1 is not a substrate of ATE1, the interaction takes place in the cytoplasm and seems to increase ATE1 arginyltransferase activity.

Its subcellular location is the nucleus. It localises to the cytoplasm. The catalysed reaction is an N-terminal L-alpha-aminoacyl-[protein] + L-arginyl-tRNA(Arg) = an N-terminal L-arginyl-L-aminoacyl-[protein] + tRNA(Arg) + H(+). Involved in the post-translational conjugation of arginine to the N-terminal aspartate or glutamate of a protein. This arginylation is required for degradation of the protein via the ubiquitin pathway. Does not arginylate cysteine residues. The chain is Arginyl-tRNA--protein transferase 1 (ATE1) from Macaca fascicularis (Crab-eating macaque).